Consider the following 102-residue polypeptide: Large ribosomal subunit protein uL23 (102 aa).

The protein belongs to the universal ribosomal protein uL23 family. As to quaternary structure, part of the 50S ribosomal subunit. Contacts protein L29, and trigger factor when it is bound to the ribosome.

In terms of biological role, one of the early assembly proteins it binds 23S rRNA. One of the proteins that surrounds the polypeptide exit tunnel on the outside of the ribosome. Forms the main docking site for trigger factor binding to the ribosome. The chain is Large ribosomal subunit protein uL23 from Paramagnetospirillum magneticum (strain ATCC 700264 / AMB-1) (Magnetospirillum magneticum).